The following is a 124-amino-acid chain: Galanin peptides (124 aa).

An N-terminal signal peptide occupies residues Met-1–Ser-19. Residues Ala-20 to Glu-30 constitute a propeptide that is removed on maturation. A Threonine amide modification is found at Thr-61. Ser-117 and Ser-118 each carry phosphoserine.

This sequence belongs to the galanin family.

The protein localises to the secreted. In terms of biological role, endocrine hormone of the central and peripheral nervous systems that binds and activates the G protein-coupled receptors GALR1, GALR2, and GALR3. This small neuropeptide may regulate diverse physiologic functions including contraction of smooth muscle of the gastrointestinal and genitourinary tract, growth hormone and insulin release and adrenal secretion. The protein is Galanin peptides (Gal) of Rattus norvegicus (Rat).